A 661-amino-acid polypeptide reads, in one-letter code: 72 kDa type IV collagenase (661 aa).

A signal peptide spans 1–30 (MTEARVSRGALAALLRALCALGCLLGRAAA). Positions 31–110 (APSPIIKFPG…PRCGNPDVAN (80 aa)) are cleaved as a propeptide — activation peptide. A Cysteine switch motif is present at residues 101–108 (PRCGNPDV). Cys103 contributes to the Zn(2+) binding site. The interval 111–222 (YNFFPRKPKW…LRTLGEGQVV (112 aa)) is collagenase-like 1. Ca(2+) contacts are provided by Asp135 and Asp169. Positions 179 and 181 each coordinate Zn(2+). Positions 186 and 187 each coordinate Ca(2+). Residue His194 participates in Zn(2+) binding. Positions 201, 203, and 205 each coordinate Ca(2+). Position 207 (His207) interacts with Zn(2+). Residues Asp209, Asp210, and Glu212 each coordinate Ca(2+). The interval 223–397 (RVKYGNADGE…WGFCPDQGYS (175 aa)) is collagen-binding. 3 consecutive Fibronectin type-II domains span residues 229 to 277 (ADGE…FCPH), 287 to 335 (ADGQ…FCPE), and 345 to 393 (SEGA…FCPD). Disulfide bonds link Cys234-Cys260, Cys248-Cys275, Cys292-Cys318, Cys306-Cys333, Cys350-Cys376, and Cys364-Cys391. The segment at 398-466 (LFLVAAHEFG…GPTPTLGPVT (69 aa)) is collagenase-like 2. His404 contacts Zn(2+). Glu405 is an active-site residue. Positions 408 and 414 each coordinate Zn(2+). Positions 415 to 661 (SQDPGALMAP…GSIKSDWLGC (247 aa)) are required for inhibitor TIMP2 binding. Hemopexin repeat units lie at residues 469-517 (LCKQ…WPEL), 518-564 (PEKI…GLPP), 566-614 (VQKV…WNAI), and 615-661 (PDNL…WLGC). Cys470 and Cys661 are disulfide-bonded. 3 residues coordinate Ca(2+): Asp477, Asp522, and Asp570. Asn574 carries N-linked (GlcNAc...) asparagine glycosylation. Asp619 is a Ca(2+) binding site. An N-linked (GlcNAc...) asparagine glycan is attached at Asn643.

The protein belongs to the peptidase M10A family. Interacts (via the C-terminal hemopexin-like domains-containing region) with the integrin alpha-V/beta-3; the interaction promotes vascular invasion in angiogenic vessels and melamoma cells. Interacts (via the C-terminal PEX domain) with TIMP2 (via the C-terminal); the interaction inhibits the degradation activity. Interacts with GSK3B. The cofactor is Ca(2+). Zn(2+) is required as a cofactor. Post-translationally, phosphorylation on multiple sites modulates enzymatic activity. Phosphorylated by PKC in vitro. In terms of processing, the propeptide is processed by MMP14 (MT-MMP1) and MMP16 (MT-MMP3). Autocatalytic cleavage in the C-terminal produces the anti-angiogenic peptide, PEX. This processing appears to be facilitated by binding integrinv/beta3.

It localises to the secreted. It is found in the extracellular space. The protein resides in the extracellular matrix. The protein localises to the membrane. Its subcellular location is the nucleus. It carries out the reaction Cleavage of gelatin type I and collagen types IV, V, VII, X. Cleaves the collagen-like sequence Pro-Gln-Gly-|-Ile-Ala-Gly-Gln.. Functionally, ubiquitinous metalloproteinase that is involved in diverse functions such as remodeling of the vasculature, angiogenesis, tissue repair, tumor invasion, inflammation, and atherosclerotic plaque rupture. As well as degrading extracellular matrix proteins, can also act on several nonmatrix proteins such as big endothelial 1 and beta-type CGRP promoting vasoconstriction. Also cleaves KISS at a Gly-|-Leu bond. Appears to have a role in myocardial cell death pathways. Contributes to myocardial oxidative stress by regulating the activity of GSK3beta. Cleaves GSK3beta in vitro. Involved in the formation of the fibrovascular tissues. In terms of biological role, PEX, the C-terminal non-catalytic fragment of MMP2, possesses anti-angiogenic and anti-tumor properties and inhibits cell migration and cell adhesion to FGF2 and vitronectin. Ligand for integrin alpha-v/beta-3 on the surface of blood vessels. In Bos taurus (Bovine), this protein is 72 kDa type IV collagenase (MMP2).